The primary structure comprises 613 residues: tRNA 5-methylaminomethyl-2-thiouridine biosynthesis bifunctional protein MnmC (613 aa).

The interval 1–225 (MKKAKLIFKD…KREMIKAYLE (225 aa)) is tRNA (mnm(5)s(2)U34)-methyltransferase. Residues 252 to 613 (IGAGISSAVL…FLIRKLKKGL (362 aa)) are FAD-dependent cmnm(5)s(2)U34 oxidoreductase.

The protein in the N-terminal section; belongs to the methyltransferase superfamily. tRNA (mnm(5)s(2)U34)-methyltransferase family. In the C-terminal section; belongs to the DAO family. FAD is required as a cofactor.

It is found in the cytoplasm. The catalysed reaction is 5-aminomethyl-2-thiouridine(34) in tRNA + S-adenosyl-L-methionine = 5-methylaminomethyl-2-thiouridine(34) in tRNA + S-adenosyl-L-homocysteine + H(+). Catalyzes the last two steps in the biosynthesis of 5-methylaminomethyl-2-thiouridine (mnm(5)s(2)U) at the wobble position (U34) in tRNA. Catalyzes the FAD-dependent demodification of cmnm(5)s(2)U34 to nm(5)s(2)U34, followed by the transfer of a methyl group from S-adenosyl-L-methionine to nm(5)s(2)U34, to form mnm(5)s(2)U34. The chain is tRNA 5-methylaminomethyl-2-thiouridine biosynthesis bifunctional protein MnmC from Campylobacter jejuni (strain RM1221).